The chain runs to 152 residues: Small ribosomal subunit protein uS15 (152 aa).

Residues 1–20 are disordered; the sequence is MNKRRANGSSHSTRPVRTGS.

This sequence belongs to the universal ribosomal protein uS15 family. Part of the 30S ribosomal subunit.

This Metallosphaera sedula (strain ATCC 51363 / DSM 5348 / JCM 9185 / NBRC 15509 / TH2) protein is Small ribosomal subunit protein uS15.